We begin with the raw amino-acid sequence, 744 residues long: MSEVANSTSPVQDGADANGAQINTNVPAASGDAPTPTTAAQQAHQNSASLYVGELDPSVTEAMLFELFSSIGQVASIRVCRDAVTRRSLGYAYVNYNSSEDGEKALEELNYTVIKGKPCRIMWSQRDPALRKTGQGNVFIKNLDHAIDNKALHDTFAAFGNILSCKVAQDELGNSKGYGFVHYETAEAANNAIKHVNGMLLNEKKVFVGHHIPKKERMSKFEEMKANFTNIYVKNIDLDVTDEDFRELFEKHGDITSASIARDDQGKSRGFGFVNYIRHEAAAVAVDHLNDIEFKGQKLYVGRAQKKHEREEELRKQYEAARLEKQSKYQGVNLYIKNLNDDVDDEKLRDMFTPFGTITSAKVILRDEEKKDEEEKEVKEEKKEDEKKEDEEAKEGSSSEQNGEDTKAGDKVTIKGEKKILGKSKGFGFVCFSNPDEATKAVTEMNQKMIEGKPLYVALAQRKDVRKNQLEATIQARNQLRMQQQQQQQFGGIPQMFIAPGQQPMMYPPGARGQMPFPAGMPGAQGGRGAGFPGGMPGQQGGRGGPNAQQMPPMYMPPGMAPGAFPPGPYMNQQYMQLAQAAQQAMGGRGGRGGPMPGMPGMPQAQIAGGPGIRGGQGGFPQGGRGAPGGRGQPPMPGFPQGGRPGGPGVDMSVLSAAAPGQQKQMLGEALYPKIHEMQPELAGKITGMLLEMDNSELINLTADESALRAKVDEAMSVYDEYVKNKEGDGEKEAPKEESKEEKA.

Residues 1–11 (MSEVANSTSPV) show a composition bias toward polar residues. Residues 1 to 42 (MSEVANSTSPVQDGADANGAQINTNVPAASGDAPTPTTAAQQ) form a disordered region. Residues 33 to 42 (APTPTTAAQQ) are compositionally biased toward low complexity. 4 RRM domains span residues 48 to 126 (ASLY…WSQR), 136 to 213 (GNVF…HHIP), 229 to 306 (TNIY…RAQK), and 332 to 462 (VNLY…LAQR). Disordered regions lie at residues 368–411 (EEKK…AGDK), 527–550 (GRGA…NAQQ), 607–651 (IAGG…PGVD), and 723–744 (VKNK…EEKA). The span at 376–397 (KEVKEEKKEDEKKEDEEAKEGS) shows a compositional bias: basic and acidic residues. 3 stretches are compositionally biased toward gly residues: residues 527–545 (GRGA…GRGG), 609–632 (GGPG…GGRG), and 640–649 (PQGGRPGGPG). Residues 647–724 (GPGVDMSVLS…AMSVYDEYVK (78 aa)) form the PABC domain.

This sequence belongs to the polyadenylate-binding protein type-1 family.

It localises to the cytoplasm. Its subcellular location is the nucleus. Its function is as follows. Binds the poly(A) tail of mRNA. Appears to be an important mediator of the multiple roles of the poly(A) tail in mRNA biogenesis, stability and translation. In the nucleus, involved in both mRNA cleavage and polyadenylation. Is also required for efficient mRNA export to the cytoplasm. Acts in concert with a poly(A)-specific nuclease (PAN) to affect poly(A) tail shortening, which may occur concomitantly with either nucleocytoplasmic mRNA transport or translational initiation. In the cytoplasm, stimulates translation initiation and regulates mRNA decay through translation termination-coupled poly(A) shortening, probably mediated by PAN. The chain is Polyadenylate-binding protein, cytoplasmic and nuclear (PAB1) from Phaeosphaeria nodorum (strain SN15 / ATCC MYA-4574 / FGSC 10173) (Glume blotch fungus).